The following is a 1047-amino-acid chain: MAVTLDKDAYYRRVKRLYSNWRKGEDEYASIDAIVVSVGVDEEIVYAKSTALQTWLFGYELTDTIMVFCDDKIIFMASKKKVEFLKQIANTKGNENANGAPAITLLVREKNESNKSSFDKMIDAIKESKSGKKIGVFSKDKFPGEFMKSWSDCLNKEGFDKVDISAVVAYTIAVKEDGELNLMKKAASITSEVFNKFFKERVMEIVDADEKVRHSKLAESVEKAIEEKKYLAGADPSTVEMCYPPIIQSGGNYNLKFSVVSDKNHMHFGAITCAMGIRFKSYCSNLVRTLMVDPTQEVQENYNFLLQLQEELLKELRHGVKICDVYNSVMDVVKKQKPELLNKITKNLGFGMGIEFREGSLVINSKNQYKLKKGMVFSINLGFSDLTNKEGKKPEEKTYALFIGDTVLVDEDGPATILTSVKKKVKNVGIFLKNEDDEEEEEEKDEAEDLLGRGSRAALLTERTRNEMTAEEKRRAHQKELAAQLNEEAKRRLTEQKGEQQIQKARKSNVSYKNPSLMPKEPHIREMKIYIDKKYETVIMPVFGIATPFHIATIKNISMSVEGDYTYLRINFYCPGSALGRNEGNIFPNPEATFVKEITYRASNMKAPGEQTVPALNLQNAFRIIKEVQKRYKTREAEEKEKEGIVKQDSLVINLNRSNPKLKDLYIRPNIAQKRMQGSLEAHVNGFRFTSVRGDKVDILYNNIKHALFQPCDGEMIIVLHFHLKNAVMFGKKRHTDVQFYTEVGEITTDLGKHQHMHDRDDLYAEQMEREMRHKLKTAFKNFIEKVEALTKEELEFEVPFRDLGFNGAPYRSTCLLQPTSSALVNATEWPPFVVTLDEVELIHFERVQFHLKNFDMVIVYKDYSKKVTMINAIPVASLDPIKEWLNSCDLKYTEGVQSLNWTKIMKTIVDDPEGFFEQGGWSFLEPEGEGSDAEDGDSESEIEDETFNPSEDDYEEEEEDSDEDYSSEAEESDYSKESLGSEEESGKDWDELEEEARKADRESRYEEEEEQSRSMSRKRKASVHSSGRGSNRGSRHSSAPPKKKRK.

Ala2 is subject to N-acetylalanine. Lys139 carries the post-translational modification N6-acetyllysine. Ser188 carries the phosphoserine modification. Residues Lys196 and Lys223 each carry the N6-acetyllysine modification. At Ser455 the chain carries Phosphoserine. Positions 465 to 507 form a coiled coil; it reads RNEMTAEEKRRAHQKELAAQLNEEAKRRLTEQKGEQQIQKARK. The tract at residues 491 to 518 is disordered; the sequence is RRLTEQKGEQQIQKARKSNVSYKNPSLM. A Glycyl lysine isopeptide (Lys-Gly) (interchain with G-Cter in SUMO2) cross-link involves residue Lys497. The span at 499–514 shows a compositional bias: polar residues; that stretch reads EQQIQKARKSNVSYKN. Residue Ser508 is modified to Phosphoserine. Lys513 carries the N6-acetyllysine; alternate modification. Lys513 participates in a covalent cross-link: Glycyl lysine isopeptide (Lys-Gly) (interchain with G-Cter in SUMO2); alternate. Lys647 participates in a covalent cross-link: Glycyl lysine isopeptide (Lys-Gly) (interchain with G-Cter in SUMO2). A phosphoserine mark is found at Ser650 and Ser658. An N6-acetyllysine mark is found at Lys732 and Lys786. Thr903 is modified (phosphothreonine). An N6-acetyllysine modification is found at Lys904. Residues 918 to 1047 are disordered; that stretch reads EQGGWSFLEP…SSAPPKKKRK (130 aa). The span at 927–973 shows a compositional bias: acidic residues; that stretch reads PEGEGSDAEDGDSESEIEDETFNPSEDDYEEEEEDSDEDYSSEAEES. A phosphoserine mark is found at Ser979, Ser982, Ser986, and Ser1015. Positions 985 to 1005 are enriched in basic and acidic residues; sequence ESGKDWDELEEEARKADRESR. Low complexity predominate over residues 1024–1039; the sequence is VHSSGRGSNRGSRHSS.

The protein belongs to the peptidase M24 family. SPT16 subfamily. In terms of assembly, interacts with MYOG (via C-terminal region). Component of the FACT complex, a stable heterodimer of SSRP1 and SUPT16H. Also a component of a CK2-SPT16-SSRP1 complex which forms following UV irradiation, composed of SSRP1, SUPT16H, CSNK2A1, CSNK2A2 and CSNK2B. Interacts with NEK9. Binds to histone H2A-H2B. Identified in a centromere complex containing histones H2A, H2B and H4, and at least CENPA, CENPB, CENPC, CENPT, CENPN, HJURP, SUPT16H, SSRP1 and RSF1. Interacts with GTF2E2. ADP-ribosylated. ADP-ribosylation by PARP1 is induced by genotoxic stress and correlates with dissociation of FACT from chromatin. As to expression, widely expressed. Expressed in brain, liver, heart, kidneys, lungs, spleen, thymus, ovary, and testes, with highest levels of expression observed in thymus.

It localises to the nucleus. The protein localises to the chromosome. Component of the FACT complex, a general chromatin factor that acts to reorganize nucleosomes. The FACT complex is involved in multiple processes that require DNA as a template such as mRNA elongation, DNA replication and DNA repair. During transcription elongation the FACT complex acts as a histone chaperone that both destabilizes and restores nucleosomal structure. It facilitates the passage of RNA polymerase II and transcription by promoting the dissociation of one histone H2A-H2B dimer from the nucleosome, then subsequently promotes the reestablishment of the nucleosome following the passage of RNA polymerase II. The FACT complex is probably also involved in phosphorylation of 'Ser-392' of p53/TP53 via its association with CK2 (casein kinase II). In Mus musculus (Mouse), this protein is FACT complex subunit SPT16 (Supt16h).